The sequence spans 129 residues: Natriuretic peptides B (129 aa).

The signal sequence occupies residues 1–26 (MDPQKALSRTLLLLLFLHLSLLGCRS). Cysteine 107 and cysteine 123 form a disulfide bridge.

This sequence belongs to the natriuretic peptide family. In terms of processing, the precursor molecule is proteolytically cleaved, possibly by FURIN or CORIN, to produce the active peptide. May undergo further proteolytic cleavage by various proteases such as DPP4, MME and possibly FAP, to give rise to a variety of shorter peptides. May be cleaved at Pro-99 by the prolyl endopeptidase FAP (seprase) activity (in vitro). May be degraded by IDE. During IDE degradation, the resulting products initially increase the activation of NPR1 and can also stimulate NPR2 to produce cGMP before the fragments are completely degraded and inactivated by IDE (in vitro).

Its subcellular location is the secreted. Cardiac hormone that plays a key role in mediating cardio-renal homeostasis. May also function as a paracrine antifibrotic factor in the heart. Acts by specifically binding and stimulating NPR1 to produce cGMP, which in turn activates effector proteins that drive various biological responses. Involved in regulating the extracellular fluid volume and maintaining the fluid-electrolyte balance through natriuresis, diuresis, vasorelaxation, and inhibition of renin and aldosterone secretion. Binds the clearance receptor NPR3. This is Natriuretic peptides B (NPPB) from Ovis aries (Sheep).